A 241-amino-acid polypeptide reads, in one-letter code: Attacin-C (241 aa).

An N-terminal signal peptide occupies residues 1–21; the sequence is MSKIVLLIVVIVGVLGSLAVA. The propeptide occupies 22–23; sequence LP. The residue at position 24 (glutamine 24) is a Pyrrolidone carboxylic acid. The O-linked (GalNAc...) threonine glycan is linked to threonine 39. Serine 127 is modified (phosphoserine).

Belongs to the attacin/sarcotoxin-2 family. As to expression, hemolymph (at protein level).

The protein localises to the secreted. In terms of biological role, has antimicrobial activity in synergy with other peptides. Strongest activity observed against E.cloacae. This is Attacin-C from Drosophila melanogaster (Fruit fly).